A 118-amino-acid polypeptide reads, in one-letter code: Large ribosomal subunit protein bL20 (118 aa).

This sequence belongs to the bacterial ribosomal protein bL20 family.

Its function is as follows. Binds directly to 23S ribosomal RNA and is necessary for the in vitro assembly process of the 50S ribosomal subunit. It is not involved in the protein synthesizing functions of that subunit. The sequence is that of Large ribosomal subunit protein bL20 from Macrococcus caseolyticus (strain JCSC5402) (Macrococcoides caseolyticum).